We begin with the raw amino-acid sequence, 347 residues long: GMP reductase (347 aa).

Residue 108–131 (ADFEKTKQILDLNPALNFVCIDVA) coordinates NADP(+). The K(+) site is built by Gly-181 and Gly-183. Catalysis depends on Cys-186, which acts as the Thioimidate intermediate. NADP(+) is bound at residue 216 to 239 (IVSDGGCTTPGDVAKAFGGGADFV).

It belongs to the IMPDH/GMPR family. GuaC type 1 subfamily. Homotetramer.

It catalyses the reaction IMP + NH4(+) + NADP(+) = GMP + NADPH + 2 H(+). In terms of biological role, catalyzes the irreversible NADPH-dependent deamination of GMP to IMP. It functions in the conversion of nucleobase, nucleoside and nucleotide derivatives of G to A nucleotides, and in maintaining the intracellular balance of A and G nucleotides. In Shigella boydii serotype 4 (strain Sb227), this protein is GMP reductase.